Reading from the N-terminus, the 807-residue chain is Leucine--tRNA ligase (807 aa).

The 'HIGH' region signature appears at 38–49; it reads PYPSGSGLHVGH. Residues 579–583 carry the 'KMSKS' region motif; that stretch reads KMSKS. Lys-582 is a binding site for ATP.

It belongs to the class-I aminoacyl-tRNA synthetase family.

It is found in the cytoplasm. The catalysed reaction is tRNA(Leu) + L-leucine + ATP = L-leucyl-tRNA(Leu) + AMP + diphosphate. In Mycoplasmopsis pulmonis (strain UAB CTIP) (Mycoplasma pulmonis), this protein is Leucine--tRNA ligase.